Consider the following 63-residue polypeptide: Large ribosomal subunit protein uL29 (63 aa).

The protein belongs to the universal ribosomal protein uL29 family.

This chain is Large ribosomal subunit protein uL29, found in Photobacterium profundum (strain SS9).